The sequence spans 160 residues: Phosphopantetheine adenylyltransferase (160 aa).

A substrate-binding site is contributed by threonine 9. Residues 9–10 and histidine 17 each bind ATP; that span reads TF. Positions 41, 73, and 87 each coordinate substrate. ATP is bound by residues 88 to 90, glutamate 98, and 123 to 129; these read GLR and YSFISST.

This sequence belongs to the bacterial CoaD family. In terms of assembly, homohexamer. Mg(2+) is required as a cofactor.

It is found in the cytoplasm. It carries out the reaction (R)-4'-phosphopantetheine + ATP + H(+) = 3'-dephospho-CoA + diphosphate. The protein operates within cofactor biosynthesis; coenzyme A biosynthesis; CoA from (R)-pantothenate: step 4/5. Functionally, reversibly transfers an adenylyl group from ATP to 4'-phosphopantetheine, yielding dephospho-CoA (dPCoA) and pyrophosphate. In Ectopseudomonas mendocina (strain ymp) (Pseudomonas mendocina), this protein is Phosphopantetheine adenylyltransferase.